The primary structure comprises 212 residues: V-type ATP synthase subunit E (212 aa).

It belongs to the V-ATPase E subunit family.

In terms of biological role, produces ATP from ADP in the presence of a proton gradient across the membrane. The sequence is that of V-type ATP synthase subunit E from Nitrosococcus oceani (strain ATCC 19707 / BCRC 17464 / JCM 30415 / NCIMB 11848 / C-107).